The following is a 422-amino-acid chain: Glyceraldehyde-3-phosphate dehydrogenase GAPCP1, chloroplastic (422 aa).

Residues 1-69 (MAFSSLLRSA…NARSVQPIKA (69 aa)) constitute a chloroplast transit peptide. A compositionally biased stretch (polar residues) spans 50–63 (SGISSSLQNGNARS). Positions 50 to 84 (SGISSSLQNGNARSVQPIKATATEVPSAVRRSSSS) are disordered. Position 70 is an N-acetylthreonine (Thr70). NAD(+)-binding positions include 96–97 (RI), Asp118, and Arg164. D-glyceraldehyde 3-phosphate contacts are provided by residues 235–237 (SCT), Thr266, 295–296 (TG), and Arg318. The active-site Nucleophile is Cys236. Asn400 provides a ligand contact to NAD(+).

This sequence belongs to the glyceraldehyde-3-phosphate dehydrogenase family. In terms of assembly, homotetramer. As to expression, expressed in shoot and root vasculature, leaf veins and vascular tissue of flowers and siliques.

The protein resides in the plastid. The protein localises to the chloroplast stroma. It catalyses the reaction D-glyceraldehyde 3-phosphate + phosphate + NAD(+) = (2R)-3-phospho-glyceroyl phosphate + NADH + H(+). In terms of biological role, involved in plastidial glycolytic pathway and plays a specific role in glycolytic energy production in non-green plastids and chloroplasts. Essential for breakdown of starch to form sucrose for export to non-photosynthetic tissues, and to generate primary metabolites for anabolic pathways such as fatty acid and amino acid synthesis. Plays an important role in plant development by providing substrates for the phosphorylated pathway of serine biosynthesis in roots. Plays a crucial role in pollen development. Functionally redundant with GAPCP2. The protein is Glyceraldehyde-3-phosphate dehydrogenase GAPCP1, chloroplastic (GAPCP1) of Arabidopsis thaliana (Mouse-ear cress).